The sequence spans 332 residues: DNA-directed RNA polymerase subunit alpha (332 aa).

Residues 1–234 (MTVTANQVLR…DQLSVFGDFT (234 aa)) are alpha N-terminal domain (alpha-NTD). The interval 248–332 (VDPVLLRPID…AGVASHGMLG (85 aa)) is alpha C-terminal domain (alpha-CTD).

It belongs to the RNA polymerase alpha chain family. In terms of assembly, homodimer. The RNAP catalytic core consists of 2 alpha, 1 beta, 1 beta' and 1 omega subunit. When a sigma factor is associated with the core the holoenzyme is formed, which can initiate transcription.

The catalysed reaction is RNA(n) + a ribonucleoside 5'-triphosphate = RNA(n+1) + diphosphate. DNA-dependent RNA polymerase catalyzes the transcription of DNA into RNA using the four ribonucleoside triphosphates as substrates. The polypeptide is DNA-directed RNA polymerase subunit alpha (Stenotrophomonas maltophilia (strain R551-3)).